Consider the following 507-residue polypeptide: Inositol-3-phosphate synthase (507 aa).

G70, G71, N72, N73, D143, I180, Q190, R193, T230, A231, N232, T233, G281, S282, D306, S309, N340, N341, D342, K355, A391, D419, and S420 together coordinate NAD(+).

It belongs to the myo-inositol 1-phosphate synthase family. NAD(+) serves as cofactor.

The protein localises to the cytoplasm. Its subcellular location is the cytosol. It localises to the nucleus. The enzyme catalyses D-glucose 6-phosphate = 1D-myo-inositol 3-phosphate. It functions in the pathway polyol metabolism; myo-inositol biosynthesis; myo-inositol from D-glucose 6-phosphate: step 1/2. Its function is as follows. Key enzyme in myo-inositol biosynthesis pathway that catalyzes the conversion of glucose 6-phosphate to 1-myo-inositol 1-phosphate in a NAD-dependent manner. This Citrus paradisi (Grapefruit) protein is Inositol-3-phosphate synthase.